We begin with the raw amino-acid sequence, 395 residues long: Elongation factor Tu (395 aa).

Residues 10–204 (KPHVNVGTIG…AVDAYIDTPL (195 aa)) form the tr-type G domain. The G1 stretch occupies residues 19–26 (GHVDHGKT). 19 to 26 (GHVDHGKT) contributes to the GTP binding site. Thr-26 lines the Mg(2+) pocket. Residues 60 to 64 (GITIN) are G2. The G3 stretch occupies residues 81-84 (DCPG). GTP is bound by residues 81–85 (DCPGH) and 136–139 (NKAD). The G4 stretch occupies residues 136–139 (NKAD). Positions 174–176 (SAL) are G5.

It belongs to the TRAFAC class translation factor GTPase superfamily. Classic translation factor GTPase family. EF-Tu/EF-1A subfamily. In terms of assembly, monomer.

It localises to the cytoplasm. The enzyme catalyses GTP + H2O = GDP + phosphate + H(+). Its function is as follows. GTP hydrolase that promotes the GTP-dependent binding of aminoacyl-tRNA to the A-site of ribosomes during protein biosynthesis. The polypeptide is Elongation factor Tu (Acholeplasma laidlawii (strain PG-8A)).